The following is a 119-amino-acid chain: Protein TusC (119 aa).

This sequence belongs to the DsrF/TusC family. As to quaternary structure, heterohexamer, formed by a dimer of trimers. The hexameric TusBCD complex contains 2 copies each of TusB, TusC and TusD. The TusBCD complex interacts with TusE.

Its subcellular location is the cytoplasm. Its function is as follows. Part of a sulfur-relay system required for 2-thiolation of 5-methylaminomethyl-2-thiouridine (mnm(5)s(2)U) at tRNA wobble positions. The sequence is that of Protein TusC from Photorhabdus laumondii subsp. laumondii (strain DSM 15139 / CIP 105565 / TT01) (Photorhabdus luminescens subsp. laumondii).